We begin with the raw amino-acid sequence, 81 residues long: Acyl carrier protein (81 aa).

Residues glutamate 5–leucine 80 enclose the Carrier domain. O-(pantetheine 4'-phosphoryl)serine is present on serine 40.

The protein belongs to the acyl carrier protein (ACP) family. Post-translationally, 4'-phosphopantetheine is transferred from CoA to a specific serine of apo-ACP by AcpS. This modification is essential for activity because fatty acids are bound in thioester linkage to the sulfhydryl of the prosthetic group.

The protein localises to the cytoplasm. Its pathway is lipid metabolism; fatty acid biosynthesis. Functionally, carrier of the growing fatty acid chain in fatty acid biosynthesis. This is Acyl carrier protein from Thermotoga maritima (strain ATCC 43589 / DSM 3109 / JCM 10099 / NBRC 100826 / MSB8).